A 66-amino-acid chain; its full sequence is Large ribosomal subunit protein bL35 (66 aa).

Residues 1–26 show a composition bias toward basic residues; that stretch reads MPKMKTHRGAAKRFKKTGTGKLKRGH. Residues 1 to 48 form a disordered region; sequence MPKMKTHRGAAKRFKKTGTGKLKRGHAYTSHLFANKTQKQKRKLRKAT.

It belongs to the bacterial ribosomal protein bL35 family.

In Geobacillus sp. (strain WCH70), this protein is Large ribosomal subunit protein bL35.